Consider the following 297-residue polypeptide: Protoheme IX farnesyltransferase (297 aa).

The next 9 membrane-spanning stretches (helical) occupy residues Val-26 to Val-46, Tyr-48 to Val-68, Leu-96 to Phe-116, Leu-120 to Leu-140, Asn-147 to Thr-167, Ala-174 to Leu-194, Leu-218 to Tyr-238, Tyr-245 to Ile-265, and Phe-276 to Phe-296.

This sequence belongs to the UbiA prenyltransferase family. Protoheme IX farnesyltransferase subfamily.

Its subcellular location is the cell inner membrane. It catalyses the reaction heme b + (2E,6E)-farnesyl diphosphate + H2O = Fe(II)-heme o + diphosphate. It participates in porphyrin-containing compound metabolism; heme O biosynthesis; heme O from protoheme: step 1/1. Converts heme B (protoheme IX) to heme O by substitution of the vinyl group on carbon 2 of heme B porphyrin ring with a hydroxyethyl farnesyl side group. The sequence is that of Protoheme IX farnesyltransferase from Polynucleobacter necessarius subsp. necessarius (strain STIR1).